The chain runs to 268 residues: Small ribosomal subunit protein eS1 (268 aa).

The disordered stretch occupies residues 1-21 (MAVGKNKGLSKGGKKGGKKKV).

This sequence belongs to the eukaryotic ribosomal protein eS1 family. Component of the small ribosomal subunit. Mature ribosomes consist of a small (40S) and a large (60S) subunit. The 40S subunit contains about 33 different proteins and 1 molecule of RNA (18S). The 60S subunit contains about 49 different proteins and 3 molecules of RNA (28S, 5.8S and 5S).

It localises to the cytoplasm. In terms of biological role, essential for oogenesis; required for late follicle cell development. In Drosophila sechellia (Fruit fly), this protein is Small ribosomal subunit protein eS1.